A 478-amino-acid chain; its full sequence is Protein nucleotidyltransferase YdiU (478 aa).

ATP contacts are provided by G84, G86, R87, K107, D119, G120, R170, and R177. D246 acts as the Proton acceptor in catalysis. 2 residues coordinate Mg(2+): N247 and D256. ATP is bound at residue D256.

Belongs to the SELO family. Requires Mg(2+) as cofactor. It depends on Mn(2+) as a cofactor.

It carries out the reaction L-seryl-[protein] + ATP = 3-O-(5'-adenylyl)-L-seryl-[protein] + diphosphate. It catalyses the reaction L-threonyl-[protein] + ATP = 3-O-(5'-adenylyl)-L-threonyl-[protein] + diphosphate. The enzyme catalyses L-tyrosyl-[protein] + ATP = O-(5'-adenylyl)-L-tyrosyl-[protein] + diphosphate. The catalysed reaction is L-histidyl-[protein] + UTP = N(tele)-(5'-uridylyl)-L-histidyl-[protein] + diphosphate. It carries out the reaction L-seryl-[protein] + UTP = O-(5'-uridylyl)-L-seryl-[protein] + diphosphate. It catalyses the reaction L-tyrosyl-[protein] + UTP = O-(5'-uridylyl)-L-tyrosyl-[protein] + diphosphate. Its function is as follows. Nucleotidyltransferase involved in the post-translational modification of proteins. It can catalyze the addition of adenosine monophosphate (AMP) or uridine monophosphate (UMP) to a protein, resulting in modifications known as AMPylation and UMPylation. The polypeptide is Protein nucleotidyltransferase YdiU (Escherichia coli O139:H28 (strain E24377A / ETEC)).